A 356-amino-acid chain; its full sequence is Tyrosine recombinase XerS (356 aa).

In terms of domain architecture, Core-binding (CB) spans 16-121 (VMPPYVLEYY…ALSSLYKYLT (106 aa)). One can recognise a Tyr recombinase domain in the interval 169–354 (GFLDYIDSEY…INEEQKNALD (186 aa)). Catalysis depends on residues arginine 210, lysine 234, histidine 306, arginine 309, and histidine 332. The O-(3'-phospho-DNA)-tyrosine intermediate role is filled by tyrosine 341.

The protein belongs to the 'phage' integrase family. XerS subfamily.

The protein resides in the cytoplasm. FtsK is required for recombination. Its function is as follows. Site-specific tyrosine recombinase, which acts by catalyzing the cutting and rejoining of the recombining DNA molecules. Essential to convert dimers of the bacterial chromosome into monomers to permit their segregation at cell division. Binds an atypical recombination dif site (difSL). Binds preferentially to the left arm and cooperatively to the right arm of difSL. This chain is Tyrosine recombinase XerS, found in Lactococcus lactis subsp. cremoris (strain MG1363).